Consider the following 659-residue polypeptide: Putative RING finger protein R311 (659 aa).

The RING-type zinc-finger motif lies at 502–540 (CPVCYDDDYIKTKLICGHTVCLTCVLNILPNSKGCPLCM).

This chain is Putative RING finger protein R311, found in Acanthamoeba polyphaga (Amoeba).